A 566-amino-acid polypeptide reads, in one-letter code: Class II hydrophobin FOXG_02748 (566 aa).

An N-terminal signal peptide occupies residues 1–22 (MKSKSIMAASTVMELALAQASA). Intrachain disulfides connect C497/C546, C507/C537, C508/C520, and C547/C558.

This sequence belongs to the cerato-ulmin hydrophobin family. In terms of assembly, homodimer. Homodimers further self-assemble to form highly ordered films at water-air interfaces through intermolecular interactions.

The protein localises to the secreted. It localises to the cell wall. Its function is as follows. Aerial growth, conidiation, and dispersal of filamentous fungi in the environment rely upon a capability of their secreting small amphipathic proteins called hydrophobins (HPBs) with low sequence identity. Class I can self-assemble into an outermost layer of rodlet bundles on aerial cell surfaces, conferring cellular hydrophobicity that supports fungal growth, development and dispersal; whereas Class II form highly ordered films at water-air interfaces through intermolecular interactions but contribute nothing to the rodlet structure. FOXG_02748 is a class II hydrophobin that is likely required for plant colonization. In Fusarium oxysporum f. sp. lycopersici (strain 4287 / CBS 123668 / FGSC 9935 / NRRL 34936) (Fusarium vascular wilt of tomato), this protein is Class II hydrophobin FOXG_02748.